A 628-amino-acid polypeptide reads, in one-letter code: DNA primase (628 aa).

A CHC2-type zinc finger spans residues 40–64; the sequence is CPFHEERSPSFSVAEDKQIFHCFGC. The 83-residue stretch at 269–351 folds into the Toprim domain; the sequence is NTVLLFEGFM…DLSIVSIPEK (83 aa). Residues E275, D319, and D321 each coordinate Mg(2+).

It belongs to the DnaG primase family. Monomer. Interacts with DnaB. Zn(2+) is required as a cofactor. The cofactor is Mg(2+).

It catalyses the reaction ssDNA + n NTP = ssDNA/pppN(pN)n-1 hybrid + (n-1) diphosphate.. Its function is as follows. RNA polymerase that catalyzes the synthesis of short RNA molecules used as primers for DNA polymerase during DNA replication. In Enterococcus faecalis (strain ATCC 700802 / V583), this protein is DNA primase.